The primary structure comprises 112 residues: Photosystem II reaction center Psb28 protein (112 aa).

It belongs to the Psb28 family. As to quaternary structure, part of the photosystem II complex.

The protein resides in the cellular thylakoid membrane. The sequence is that of Photosystem II reaction center Psb28 protein from Synechococcus elongatus (strain ATCC 33912 / PCC 7942 / FACHB-805) (Anacystis nidulans R2).